The following is a 121-amino-acid chain: Prefoldin subunit beta (121 aa).

It belongs to the prefoldin subunit beta family. In terms of assembly, heterohexamer of two alpha and four beta subunits.

It is found in the cytoplasm. Functionally, molecular chaperone capable of stabilizing a range of proteins. Seems to fulfill an ATP-independent, HSP70-like function in archaeal de novo protein folding. The protein is Prefoldin subunit beta of Caldivirga maquilingensis (strain ATCC 700844 / DSM 13496 / JCM 10307 / IC-167).